A 209-amino-acid polypeptide reads, in one-letter code: Ribosomal RNA large subunit methyltransferase E (209 aa).

5 residues coordinate S-adenosyl-L-methionine: glycine 63, tryptophan 65, aspartate 83, aspartate 99, and aspartate 124. Lysine 164 serves as the catalytic Proton acceptor.

Belongs to the class I-like SAM-binding methyltransferase superfamily. RNA methyltransferase RlmE family.

It is found in the cytoplasm. The catalysed reaction is uridine(2552) in 23S rRNA + S-adenosyl-L-methionine = 2'-O-methyluridine(2552) in 23S rRNA + S-adenosyl-L-homocysteine + H(+). Functionally, specifically methylates the uridine in position 2552 of 23S rRNA at the 2'-O position of the ribose in the fully assembled 50S ribosomal subunit. The chain is Ribosomal RNA large subunit methyltransferase E from Vibrio parahaemolyticus serotype O3:K6 (strain RIMD 2210633).